Reading from the N-terminus, the 310-residue chain is L-lactate dehydrogenase (310 aa).

Residues Met-10 to Val-11, Asp-32, Tyr-62, and Gly-76 to Val-77 each bind NAD(+). Substrate is bound by residues Gln-79, Arg-85, and Asn-117 to Asp-120. NAD(+) is bound by residues Ala-115–Asn-117 and Ser-140. Asp-145–Arg-148 contacts substrate. Beta-D-fructose 1,6-bisphosphate-binding residues include Arg-150 and His-165. The active-site Proton acceptor is the His-172. Tyr-218 carries the post-translational modification Phosphotyrosine. Residue Thr-227 participates in substrate binding.

Belongs to the LDH/MDH superfamily. LDH family. As to quaternary structure, homotetramer.

Its subcellular location is the cytoplasm. It catalyses the reaction (S)-lactate + NAD(+) = pyruvate + NADH + H(+). It participates in fermentation; pyruvate fermentation to lactate; (S)-lactate from pyruvate: step 1/1. Its activity is regulated as follows. Allosterically activated by fructose 1,6-bisphosphate (FBP). Its function is as follows. Catalyzes the conversion of lactate to pyruvate. The sequence is that of L-lactate dehydrogenase from Thermus thermophilus (strain ATCC 27634 / DSM 579 / HB8).